The primary structure comprises 354 residues: Vascular endothelial growth factor D (354 aa).

A signal peptide spans 1–21 (MYREWVVVNVFMMLYVQLVQG). A propeptide spans 22–88 (SSNEHGPVKR…SRSASHRSTR (67 aa)) (or 99 (in a minor form)). 3 disulfides stabilise this stretch: Cys-111–Cys-153, Cys-142–Cys-189, and Cys-146–Cys-191. Asn-155 and Asn-185 each carry an N-linked (GlcNAc...) asparagine glycan. Residues 206–354 (SIQIPEEDRC…AQGPHSRKNP (149 aa)) constitute a propeptide that is removed on maturation. A 1; approximate repeat occupies 222-237 (CPIDMLWDSNKCKCVL). Positions 222–318 (CPIDMLWDSN…PDTCSCEDRC (97 aa)) are 4 X 16 AA repeats of C-X(10)-C-X-C-X(1,3)-C. 3 consecutive repeat copies span residues 258-273 (CGPH…ECVC), 277-293 (CPKD…CFEC), and 301-318 (CQKH…EDRC). N-linked (GlcNAc...) asparagine glycosylation occurs at Asn-287.

Belongs to the PDGF/VEGF growth factor family. In terms of assembly, homodimer; non-covalent and antiparallel. Post-translationally, undergoes a complex proteolytic maturation which generates a variety of processed secreted forms with increased activity toward VEGFR-3 and VEGFR-2. VEGF-D first form an antiparallel homodimer linked by disulfide bonds before secretion. The fully processed VEGF-D is composed mostly of two VEGF homology domains (VHDs) bound by non-covalent interactions. Highly expressed in lung, heart, small intestine and fetal lung, and at lower levels in skeletal muscle, colon, and pancreas.

The protein localises to the secreted. Growth factor active in angiogenesis, lymphangiogenesis and endothelial cell growth, stimulating their proliferation and migration and also has effects on the permeability of blood vessels. May function in the formation of the venous and lymphatic vascular systems during embryogenesis, and also in the maintenance of differentiated lymphatic endothelium in adults. Binds and activates VEGFR-2 (KDR/FLK1) and VEGFR-3 (FLT4) receptors. The polypeptide is Vascular endothelial growth factor D (Homo sapiens (Human)).